Consider the following 382-residue polypeptide: Sialidase (382 aa).

Position 37 (Arg37) interacts with substrate. Residue Asp62 is the Proton acceptor of the active site. BNR repeat units lie at residues 71-82 (ARSTDFGKTWSY), 140-151 (IYSDDNGLTWSN), and 208-219 (IYSKDNGETWTM). Residue Arg245 coordinates substrate. The BNR 4 repeat unit spans residues 255–266 (YISHDLGTTWEI). Tyr347 (nucleophile) is an active-site residue.

Belongs to the glycosyl hydrolase 33 family.

It is found in the secreted. It catalyses the reaction Hydrolysis of alpha-(2-&gt;3)-, alpha-(2-&gt;6)-, alpha-(2-&gt;8)- glycosidic linkages of terminal sialic acid residues in oligosaccharides, glycoproteins, glycolipids, colominic acid and synthetic substrates.. Functionally, sialidases have been suggested to be pathogenic factors in microbial infections. This chain is Sialidase (nanH), found in Clostridium perfringens.